Reading from the N-terminus, the 425-residue chain is Argininosuccinate synthase (425 aa).

Residues 7 to 15 (AYSGGLDTS) and Ala-33 each bind ATP. L-citrulline is bound at residue Tyr-84. Gly-114 is an ATP binding site. Residues Thr-116, Asn-120, and Asp-121 each coordinate L-aspartate. L-citrulline is bound at residue Asn-120. 5 residues coordinate L-citrulline: Arg-124, Ser-177, Ser-186, Glu-267, and Tyr-279.

This sequence belongs to the argininosuccinate synthase family. Type 1 subfamily. In terms of assembly, homotetramer.

It localises to the cytoplasm. The enzyme catalyses L-citrulline + L-aspartate + ATP = 2-(N(omega)-L-arginino)succinate + AMP + diphosphate + H(+). It participates in amino-acid biosynthesis; L-arginine biosynthesis; L-arginine from L-ornithine and carbamoyl phosphate: step 2/3. In Pseudothermotoga lettingae (strain ATCC BAA-301 / DSM 14385 / NBRC 107922 / TMO) (Thermotoga lettingae), this protein is Argininosuccinate synthase.